Here is a 360-residue protein sequence, read N- to C-terminus: UDP-N-acetylglucosamine--N-acetylmuramyl-(pentapeptide) pyrophosphoryl-undecaprenol N-acetylglucosamine transferase (360 aa).

Serine 198 and glutamine 289 together coordinate UDP-N-acetyl-alpha-D-glucosamine.

The protein belongs to the glycosyltransferase 28 family. MurG subfamily.

The protein resides in the cell membrane. It carries out the reaction Mur2Ac(oyl-L-Ala-gamma-D-Glu-L-Lys-D-Ala-D-Ala)-di-trans,octa-cis-undecaprenyl diphosphate + UDP-N-acetyl-alpha-D-glucosamine = beta-D-GlcNAc-(1-&gt;4)-Mur2Ac(oyl-L-Ala-gamma-D-Glu-L-Lys-D-Ala-D-Ala)-di-trans,octa-cis-undecaprenyl diphosphate + UDP + H(+). It functions in the pathway cell wall biogenesis; peptidoglycan biosynthesis. Functionally, cell wall formation. Catalyzes the transfer of a GlcNAc subunit on undecaprenyl-pyrophosphoryl-MurNAc-pentapeptide (lipid intermediate I) to form undecaprenyl-pyrophosphoryl-MurNAc-(pentapeptide)GlcNAc (lipid intermediate II). The sequence is that of UDP-N-acetylglucosamine--N-acetylmuramyl-(pentapeptide) pyrophosphoryl-undecaprenol N-acetylglucosamine transferase from Streptococcus pyogenes serotype M18 (strain MGAS8232).